A 427-amino-acid polypeptide reads, in one-letter code: Phosphatidylserine decarboxylase proenzyme 1, mitochondrial (427 aa).

Residues 1–77 constitute a mitochondrion transit peptide; that stretch reads MRSYLRFSDR…RRFVYKLDQA (77 aa). Residues 78-88 lie on the Mitochondrial matrix side of the membrane; sequence VTAALGPNGRY. The helical transmembrane segment at 89–107 threads the bilayer; that stretch reads IAMVGMTASAVLLTFHYKF. Over 108–427 the chain is Mitochondrial intermembrane; it reads REVIAATDNV…TEDERLFAFY (320 aa). Active-site charge relay system; for autoendoproteolytic cleavage activity residues include Asp210, His268, and Ser379. Ser379 acts as the Schiff-base intermediate with substrate; via pyruvic acid; for decarboxylase activity in catalysis. The residue at position 379 (Ser379) is a Pyruvic acid (Ser); by autocatalysis.

This sequence belongs to the phosphatidylserine decarboxylase family. PSD-B subfamily. Eukaryotic type I sub-subfamily. As to quaternary structure, heterodimer of a large membrane-associated beta subunit and a small pyruvoyl-containing alpha subunit. Pyruvate is required as a cofactor. Is synthesized initially as an inactive proenzyme. Formation of the active enzyme involves a self-maturation process in which the active site pyruvoyl group is generated from an internal serine residue via an autocatalytic post-translational modification. Two non-identical subunits are generated from the proenzyme in this reaction, and the pyruvate is formed at the N-terminus of the alpha chain, which is derived from the carboxyl end of the proenzyme. The autoendoproteolytic cleavage occurs by a canonical serine protease mechanism, in which the side chain hydroxyl group of the serine supplies its oxygen atom to form the C-terminus of the beta chain, while the remainder of the serine residue undergoes an oxidative deamination to produce ammonia and the pyruvoyl prosthetic group on the alpha chain. During this reaction, the Ser that is part of the protease active site of the proenzyme becomes the pyruvoyl prosthetic group, which constitutes an essential element of the active site of the mature decarboxylase.

It localises to the mitochondrion. The protein localises to the mitochondrion inner membrane. It carries out the reaction a 1,2-diacyl-sn-glycero-3-phospho-L-serine + H(+) = a 1,2-diacyl-sn-glycero-3-phosphoethanolamine + CO2. It participates in phospholipid metabolism; phosphatidylethanolamine biosynthesis; phosphatidylethanolamine from CDP-diacylglycerol: step 2/2. Catalyzes the formation of phosphatidylethanolamine (PtdEtn) from phosphatidylserine (PtdSer). Plays a central role in phospholipid metabolism and in the interorganelle trafficking of phosphatidylserine. The sequence is that of Phosphatidylserine decarboxylase proenzyme 1, mitochondrial from Toxoplasma gondii (strain ATCC 50853 / GT1).